The following is a 652-amino-acid chain: ATP-dependent zinc metalloprotease FtsH (652 aa).

Topologically, residues 1 to 11 (MKKQNNGLIKN) are cytoplasmic. The helical transmembrane segment at 12–32 (PFLWLLFIFFLVTGFQYFYSG) threads the bilayer. The Extracellular segment spans residues 33-131 (NNSGGSQQIN…EVTVKHESSS (99 aa)). A helical membrane pass occupies residues 132-152 (GIWINLLVSIVPFGILFFFLF). At 153 to 652 (SMMGNMGGGN…EVKSKMNDEK (500 aa)) the chain is on the cytoplasmic side. Position 227–234 (227–234 (GPPGTGKT)) interacts with ATP. Histidine 449 serves as a coordination point for Zn(2+). Residue glutamate 450 is part of the active site. Residues histidine 453 and aspartate 525 each contribute to the Zn(2+) site. The interval 628–652 (MPEAVEEESHALSYDEVKSKMNDEK) is disordered. Residues 634 to 652 (EESHALSYDEVKSKMNDEK) show a composition bias toward basic and acidic residues.

In the central section; belongs to the AAA ATPase family. It in the C-terminal section; belongs to the peptidase M41 family. Homohexamer. The cofactor is Zn(2+).

Its subcellular location is the cell membrane. Functionally, acts as a processive, ATP-dependent zinc metallopeptidase for both cytoplasmic and membrane proteins. Plays a role in the quality control of integral membrane proteins. The protein is ATP-dependent zinc metalloprotease FtsH of Streptococcus pneumoniae serotype 4 (strain ATCC BAA-334 / TIGR4).